Consider the following 147-residue polypeptide: Large ribosomal subunit protein uL13 (147 aa).

This sequence belongs to the universal ribosomal protein uL13 family. As to quaternary structure, part of the 50S ribosomal subunit.

Its function is as follows. This protein is one of the early assembly proteins of the 50S ribosomal subunit, although it is not seen to bind rRNA by itself. It is important during the early stages of 50S assembly. In Renibacterium salmoninarum (strain ATCC 33209 / DSM 20767 / JCM 11484 / NBRC 15589 / NCIMB 2235), this protein is Large ribosomal subunit protein uL13.